The chain runs to 318 residues: MKTQFTPKTRKVAVIGTGFVGSSYAFSMVNQGIANELVLIDMNKEKAEGEARDINHGMPFATPMKIWAGDYKDCADADLAVITAGANQAPGETRLDLVEKNVKIFECIVKDIMNSGFDGIILVATNPVDILAHVTQKVSGLPNGRVIGSGTILDTARFRYLLSDYFEVDSRNVHAYIMGEHGDTEFPVWSHAQIGGVKLEHFINTAAIEKEPDMQHLFEQTRDAAYHIINRKGATYYGIAMGLVRITKAILDDENSILTVSALLEGQYGISDVYIGVPAIINKNGVRQIIELNLTPHEQQQLEHSASILKQTRDRAFV.

NAD(+) contacts are provided by residues Val20, Asp41, Lys46, Tyr71, and 85–86 (GA). Residues Gln88, Arg94, and 126-129 (NPVD) each bind substrate. NAD(+) contacts are provided by residues 124–126 (ATN) and Ser149. 154–157 (DTAR) contributes to the substrate binding site. Positions 159 and 174 each coordinate beta-D-fructose 1,6-bisphosphate. His181 (proton acceptor) is an active-site residue. Tyr226 carries the post-translational modification Phosphotyrosine. Substrate is bound at residue Thr235.

The protein belongs to the LDH/MDH superfamily. LDH family. As to quaternary structure, homotetramer.

The protein localises to the cytoplasm. It catalyses the reaction (S)-lactate + NAD(+) = pyruvate + NADH + H(+). The protein operates within fermentation; pyruvate fermentation to lactate; (S)-lactate from pyruvate: step 1/1. Allosterically activated by fructose 1,6-bisphosphate (FBP). Functionally, catalyzes the conversion of lactate to pyruvate. This chain is L-lactate dehydrogenase, found in Priestia megaterium (Bacillus megaterium).